The sequence spans 1055 residues: MRKKRRGFLNASTAVLVGILAGFLGVVLAATGALGFAVRESLLLKQFLFLSFEGNTDGASPFGKDVVVTASQDVAADGEYSLKVENRTSVWDGVEIDLTGKVNTGTDYLLSFHVYQTSDSPQLFSVLARTEDEKGERYKILADKVVVPNYWKEILVPFSPTFEGTPAKFSLIITSPKKTDFVFYVDNVQVLTPKEAGPKVVYETSFEKGIGDWQPRGSDVKISISPKVAHSGKKSLFVSNRQKGWHGAQISLKGILKTGKTYAFEAWVYQESGQDQTIIMTMQRKYSSDSSTKYEWIKAATVPSGQWVQLSGTYTIPAGVTVEDLTLYFESQNPTLEFYVDDVKVVDTTSAEIKLEMNPEEEIPALKDVLKDYFRVGVALPSKVFINQKDIALISKHSNSSTAENEMKPDSLLAGIENGKLKFRFETADKYIEFAQQNGMVVRGHTLVWHNQTPEWFFKDENGNLLSKEEMTERLREYIHTVVGHFKGKVYAWDVVNEAVDPNQPDGLRRSTWYQIMGPDYIELAFKFAREADPNAKLFYNDYNTFEPKKRDIIYNLVKSLKEKGLIDGIGMQCHISLATDIRQIEEAIKKFSTIPGIEIHITELDISVYRDSTSNYSEAPRTALIEQAHKMAQLFKIFKKYSNVITNVTFWGLKDDYSWRATRRNDWPLIFDKDYQAKLAYWAIVAPEVLPPLPKESKISEGEAVVVGMMDDSYMMSKPIEIYDEEGNVKATIRAIWKDSTIYVYGEVQDATKKPAEDGVAIFINPNNERTPYLQPDDTYVVLWTNWKSEVNREDVEVKKFVGPGFRRYSFEMSITIPGVEFKKDSYIGFDVAVIDDGKWYSWSDTTNSQKTNTMNYGTLKLEGVMVATAKYGTPVIDGEIDDIWNTTEEIETKSVAMGSLEKNATAKVRVLWDEENLYVLAIVKDPVLNKDNSNPWEQDSVEIFIDENNHKTGYYEDDDAQFRVNYMNEQSFGTGASAARFKTAVKLIEGGYIVEAAIKWKTIKPSPNTVIGFNVQVNDANEKGQRVGIISWSDPTNNSWRDPSKFGNLRLIK.

Positions 1 to 29 are cleaved as a signal peptide; that stretch reads MRKKRRGFLNASTAVLVGILAGFLGVVLA. An a region spans residues 30 to 357; it reads ATGALGFAVR…TTSAEIKLEM (328 aa). A GH10 domain is found at 360–688; sequence EEEIPALKDV…KLAYWAIVAP (329 aa). Catalysis depends on Glu498, which acts as the Proton donor. Residue Glu604 is the Nucleophile of the active site. CBM-cenC domains follow at residues 720–851 and 895–1040; these read PIEI…TNSQ and KSVA…PTNN.

It belongs to the glycosyl hydrolase 10 (cellulase F) family.

It carries out the reaction Endohydrolysis of (1-&gt;4)-beta-D-xylosidic linkages in xylans.. The sequence is that of Endo-1,4-beta-xylanase A (xynA) from Thermotoga neapolitana.